The primary structure comprises 277 residues: NH(3)-dependent NAD(+) synthetase (277 aa).

An ATP-binding site is contributed by 36-43 (GLSGGIDS). D42 contacts Mg(2+). Residue R118 coordinates deamido-NAD(+). Residue T138 participates in ATP binding. Residue E143 participates in Mg(2+) binding. ATP contacts are provided by K167 and S189.

The protein belongs to the NAD synthetase family. In terms of assembly, homodimer.

It catalyses the reaction deamido-NAD(+) + NH4(+) + ATP = AMP + diphosphate + NAD(+) + H(+). Its pathway is cofactor biosynthesis; NAD(+) biosynthesis; NAD(+) from deamido-NAD(+) (ammonia route): step 1/1. In terms of biological role, catalyzes the ATP-dependent amidation of deamido-NAD to form NAD. Uses ammonia as a nitrogen source. This chain is NH(3)-dependent NAD(+) synthetase, found in Chlorobium phaeobacteroides (strain BS1).